Here is a 65-residue protein sequence, read N- to C-terminus: Large ribosomal subunit protein uL29 (65 aa).

It belongs to the universal ribosomal protein uL29 family.

The polypeptide is Large ribosomal subunit protein uL29 (Lactobacillus johnsonii (strain CNCM I-12250 / La1 / NCC 533)).